The chain runs to 1524 residues: DNA-directed RNA polymerase subunit beta' (1524 aa).

Residues C58, C60, C73, and C76 each coordinate Zn(2+). The Mg(2+) site is built by D739, D741, and D743. Zn(2+) is bound by residues C1112, C1194, C1201, and C1204. The interval 1502 to 1524 (AVEAKEKEAPRRPVRREQPGKGL) is disordered.

It belongs to the RNA polymerase beta' chain family. As to quaternary structure, the RNAP catalytic core consists of 2 alpha, 1 beta, 1 beta' and 1 omega subunit. When a sigma factor is associated with the core the holoenzyme is formed, which can initiate transcription. The cofactor is Mg(2+). Requires Zn(2+) as cofactor.

It catalyses the reaction RNA(n) + a ribonucleoside 5'-triphosphate = RNA(n+1) + diphosphate. In terms of biological role, DNA-dependent RNA polymerase catalyzes the transcription of DNA into RNA using the four ribonucleoside triphosphates as substrates. The polypeptide is DNA-directed RNA polymerase subunit beta' (Thermus aquaticus).